A 269-amino-acid chain; its full sequence is Cytochrome c oxidase subunit 3 (269 aa).

The next 7 helical transmembrane spans lie at 7 to 29 (GYLQ…TSFS), 51 to 71 (IILS…DIIA), 90 to 110 (GFLL…WAYL), 127 to 147 (VGID…ILLA), 167 to 187 (TLYG…FQFL), 205 to 225 (FYSL…MLVI), and 247 to 267 (ILYL…VYWW).

This sequence belongs to the cytochrome c oxidase subunit 3 family. In terms of assembly, component of the cytochrome c oxidase (complex IV, CIV), a multisubunit enzyme composed of a catalytic core of 3 subunits and several supernumerary subunits. The complex exists as a monomer or a dimer and forms supercomplexes (SCs) in the inner mitochondrial membrane with ubiquinol-cytochrome c oxidoreductase (cytochrome b-c1 complex, complex III, CIII).

Its subcellular location is the mitochondrion inner membrane. It catalyses the reaction 4 Fe(II)-[cytochrome c] + O2 + 8 H(+)(in) = 4 Fe(III)-[cytochrome c] + 2 H2O + 4 H(+)(out). Component of the cytochrome c oxidase, the last enzyme in the mitochondrial electron transport chain which drives oxidative phosphorylation. The respiratory chain contains 3 multisubunit complexes succinate dehydrogenase (complex II, CII), ubiquinol-cytochrome c oxidoreductase (cytochrome b-c1 complex, complex III, CIII) and cytochrome c oxidase (complex IV, CIV), that cooperate to transfer electrons derived from NADH and succinate to molecular oxygen, creating an electrochemical gradient over the inner membrane that drives transmembrane transport and the ATP synthase. Cytochrome c oxidase is the component of the respiratory chain that catalyzes the reduction of oxygen to water. Electrons originating from reduced cytochrome c in the intermembrane space (IMS) are transferred via the dinuclear copper A center (CU(A)) of subunit 2 and heme A of subunit 1 to the active site in subunit 1, a binuclear center (BNC) formed by heme A3 and copper B (CU(B)). The BNC reduces molecular oxygen to 2 water molecules using 4 electrons from cytochrome c in the IMS and 4 protons from the mitochondrial matrix. The protein is Cytochrome c oxidase subunit 3 (COX3) of Candida parapsilosis (Yeast).